Consider the following 132-residue polypeptide: Peptide methionine sulfoxide reductase MsrB (132 aa).

The 123-residue stretch at 8 to 130 (LDSWREELTE…NSASLKLVPR (123 aa)) folds into the MsrB domain. Residues Cys47, Cys50, Cys96, and Cys99 each contribute to the Zn(2+) site. The active-site Nucleophile is the Cys119.

This sequence belongs to the MsrB Met sulfoxide reductase family. Zn(2+) serves as cofactor.

It catalyses the reaction L-methionyl-[protein] + [thioredoxin]-disulfide + H2O = L-methionyl-(R)-S-oxide-[protein] + [thioredoxin]-dithiol. In Pseudomonas aeruginosa (strain UCBPP-PA14), this protein is Peptide methionine sulfoxide reductase MsrB.